Consider the following 210-residue polypeptide: Small ribosomal subunit protein uS3 (210 aa).

The KH type-2 domain occupies 17 to 86; the sequence is IDEFLEKELR…NPQIEVEEIK (70 aa).

Belongs to the universal ribosomal protein uS3 family. In terms of assembly, part of the 30S ribosomal subunit.

Binds the lower part of the 30S subunit head. The polypeptide is Small ribosomal subunit protein uS3 (Pyrococcus furiosus (strain ATCC 43587 / DSM 3638 / JCM 8422 / Vc1)).